The following is a 154-amino-acid chain: Ribonuclease H (154 aa).

Residues 5–146 (EQNIVYLYCD…ADELANRGID (142 aa)) enclose the RNase H type-1 domain. Positions 14, 52, 74, and 138 each coordinate Mg(2+).

Belongs to the RNase H family. In terms of assembly, monomer. It depends on Mg(2+) as a cofactor.

Its subcellular location is the cytoplasm. The catalysed reaction is Endonucleolytic cleavage to 5'-phosphomonoester.. Endonuclease that specifically degrades the RNA of RNA-DNA hybrids. This Coxiella burnetii (strain CbuK_Q154) (Coxiella burnetii (strain Q154)) protein is Ribonuclease H.